The sequence spans 297 residues: Small ribosomal subunit biogenesis GTPase RsgA (297 aa).

A CP-type G domain is found at 65–223 (INEIGRPAVA…IADTPGFSAI (159 aa)). Residues 114–117 (SKSD) and 166–174 (GQSGAGKST) contribute to the GTP site. Positions 247, 252, 254, and 260 each coordinate Zn(2+).

Belongs to the TRAFAC class YlqF/YawG GTPase family. RsgA subfamily. As to quaternary structure, monomer. Associates with 30S ribosomal subunit, binds 16S rRNA. It depends on Zn(2+) as a cofactor.

It localises to the cytoplasm. One of several proteins that assist in the late maturation steps of the functional core of the 30S ribosomal subunit. Helps release RbfA from mature subunits. May play a role in the assembly of ribosomal proteins into the subunit. Circularly permuted GTPase that catalyzes slow GTP hydrolysis, GTPase activity is stimulated by the 30S ribosomal subunit. This Lactobacillus johnsonii (strain CNCM I-12250 / La1 / NCC 533) protein is Small ribosomal subunit biogenesis GTPase RsgA.